Reading from the N-terminus, the 90-residue chain is MKKKGGRKIFGFMVKEEKEEKKGSVEFQVFSFTNKIRRLASHLELHKKDFSSERGLRRLLGKRRRLLAYLAKKNRVRYKKLISQLNIREQ.

The protein belongs to the universal ribosomal protein uS15 family. In terms of assembly, part of the 30S ribosomal subunit.

Its subcellular location is the plastid. It localises to the chloroplast. The protein is Small ribosomal subunit protein uS15c (rps15-A) of Brachypodium distachyon (Purple false brome).